Here is a 612-residue protein sequence, read N- to C-terminus: Oligopeptide transport ATP-binding protein OppD (612 aa).

The ABC transporter 1 domain maps to 5–255 (LEVTDLAVTF…RRMPYTVGLL (251 aa)). Residues Ser43, Gly44, Ser45, Gly46, Lys47, Ser48, Ala49, Tyr61, Gln96, Arg147, Gly158, Glu159, and His213 each coordinate ATP. Residues Cys286, Cys292, Cys299, and Cys317 each coordinate [4Fe-4S] cluster. In terms of domain architecture, ABC transporter 2 spans 350–600 (VRVRHLVKTY…PKHEYTRRLL (251 aa)). Residues Ser396, Gly397, Ser398, Gly399, Lys400, Ser401, Thr402, Gln445, Arg495, Glu499, Gly503, and His558 each coordinate ATP.

The protein belongs to the ABC transporter superfamily. As to quaternary structure, the complex is composed of an ATP-binding protein (OppD), two transmembrane proteins (OppB and OppC) and a solute-binding protein (OppA).

Its subcellular location is the cell inner membrane. The catalysed reaction is a [peptide](out) + ATP + H2O = a [peptide](in) + ADP + phosphate + H(+). Functionally, part of the ABC transporter complex OppABCD involved in the uptake of oligopeptides. Responsible for energy coupling to the transport system. This chain is Oligopeptide transport ATP-binding protein OppD, found in Mycobacterium bovis (strain ATCC BAA-935 / AF2122/97).